The chain runs to 377 residues: Unsaturated glucuronyl hydrolase (377 aa).

Asp-88 (nucleophile) is an active-site residue. Asp-149 functions as the Proton donor in the catalytic mechanism.

It belongs to the glycosyl hydrolase 88 family. In terms of assembly, monomer.

The protein resides in the cytoplasm. It catalyses the reaction beta-D-Delta(4)-GlcA-(1-&gt;4)-beta-D-Glc-(1-&gt;4)-alpha-L-Rha-(1-&gt;3)-D-Glc + H2O = beta-D-Glc-(1-&gt;4)-alpha-L-Rha-(1-&gt;3)-D-Glc + 5-dehydro-4-deoxy-D-glucuronate. With respect to regulation, partially inhibited by divalent metal ions such as calcium, copper, iron and mercury. Functionally, catalyzes the hydrolysis of oligosaccharides with unsaturated glucuronyl residues at the non-reducing terminal, to a sugar or an amino sugar, and an unsaturated D-glucuronic acid (GlcA), which is nonenzymatically converted immediately to alpha-keto acid. This Bacillus sp. (strain GL1) protein is Unsaturated glucuronyl hydrolase (ugl).